The following is a 274-amino-acid chain: Bis(5'-nucleosyl)-tetraphosphatase, symmetrical (274 aa).

The protein belongs to the Ap4A hydrolase family.

It carries out the reaction P(1),P(4)-bis(5'-adenosyl) tetraphosphate + H2O = 2 ADP + 2 H(+). Functionally, hydrolyzes diadenosine 5',5'''-P1,P4-tetraphosphate to yield ADP. In Shewanella sp. (strain MR-4), this protein is Bis(5'-nucleosyl)-tetraphosphatase, symmetrical.